A 144-amino-acid polypeptide reads, in one-letter code: Large ribosomal subunit protein uL13 (144 aa).

Belongs to the universal ribosomal protein uL13 family. Part of the 50S ribosomal subunit.

Functionally, this protein is one of the early assembly proteins of the 50S ribosomal subunit, although it is not seen to bind rRNA by itself. It is important during the early stages of 50S assembly. This chain is Large ribosomal subunit protein uL13, found in Mycoplasmopsis pulmonis (strain UAB CTIP) (Mycoplasma pulmonis).